The sequence spans 285 residues: Phosphoribosylaminoimidazole-succinocarboxamide synthase (285 aa).

It belongs to the SAICAR synthetase family.

It carries out the reaction 5-amino-1-(5-phospho-D-ribosyl)imidazole-4-carboxylate + L-aspartate + ATP = (2S)-2-[5-amino-1-(5-phospho-beta-D-ribosyl)imidazole-4-carboxamido]succinate + ADP + phosphate + 2 H(+). The protein operates within purine metabolism; IMP biosynthesis via de novo pathway; 5-amino-1-(5-phospho-D-ribosyl)imidazole-4-carboxamide from 5-amino-1-(5-phospho-D-ribosyl)imidazole-4-carboxylate: step 1/2. The polypeptide is Phosphoribosylaminoimidazole-succinocarboxamide synthase (Leptospira interrogans serogroup Icterohaemorrhagiae serovar copenhageni (strain Fiocruz L1-130)).